A 229-amino-acid chain; its full sequence is Flagellar L-ring protein (229 aa).

The N-terminal stretch at 1–25 is a signal peptide; the sequence is MKQVRLPSSATVRAACAVAVAALAG. The N-palmitoyl cysteine moiety is linked to residue C26. C26 carries S-diacylglycerol cysteine lipidation.

The protein belongs to the FlgH family. The basal body constitutes a major portion of the flagellar organelle and consists of four rings (L,P,S, and M) mounted on a central rod.

The protein localises to the cell outer membrane. Its subcellular location is the bacterial flagellum basal body. In terms of biological role, assembles around the rod to form the L-ring and probably protects the motor/basal body from shearing forces during rotation. The chain is Flagellar L-ring protein from Burkholderia orbicola (strain AU 1054).